Reading from the N-terminus, the 1244-residue chain is Protein MMS22-like (1244 aa).

The protein belongs to the MMS22 family. MMS22L subfamily. As to quaternary structure, component of the MMS22L-TONSL complex, a complex at least composed of MMS22L and TONSL/NFKBIL2. Interacts with RAD51; interaction is direct. In terms of processing, degraded by the ubiquitin-proteasome system upon replication stress.

It is found in the nucleus. Its subcellular location is the chromosome. Functionally, component of the MMS22L-TONSL complex, a complex that promotes homologous recombination-mediated repair of double-strand breaks (DSBs) at stalled or collapsed replication forks. The MMS22L-TONSL complex is required to maintain genome integrity during DNA replication. It mediates the assembly of RAD51 filaments on single-stranded DNA (ssDNA): the MMS22L-TONSL complex is recruited to DSBs following histone replacement by histone chaperones and eviction of the replication protein A complex (RPA/RP-A) from DSBs. Following recruitment to DSBs, the TONSL-MMS22L complex promotes recruitment of RAD51 filaments and subsequent homologous recombination. Within the complex, MMS22L acts by binding ssDNA. This Bos taurus (Bovine) protein is Protein MMS22-like (MMS22L).